The sequence spans 570 residues: BRICHOS domain-containing protein C09F5.1 (570 aa).

Residues 1-288 (MVVEQIEVIE…YTPELLRSLC (288 aa)) lie on the Cytoplasmic side of the membrane. 2 stretches are compositionally biased toward polar residues: residues 93–107 (SGAT…SGDS) and 228–246 (TSTL…SLVS). Disordered regions lie at residues 93–116 (SGAT…GADR) and 218–248 (SSWD…VSRE). A helical membrane pass occupies residues 289–309 (CILLLLLLLLFLMFIIFNAIF). The Extracellular segment spans residues 310–570 (NRYAVSEFLL…RKSINNATLV (261 aa)). In terms of domain architecture, BRICHOS spans 369–461 (TAVDFNTGYV…IDDCEGAQWY (93 aa)). Cysteines 395 and 455 form a disulfide.

The protein resides in the membrane. The chain is BRICHOS domain-containing protein C09F5.1 from Caenorhabditis elegans.